The chain runs to 1756 residues: Periplakin (1756 aa).

At Ser14 the chain carries Phosphoserine. Coiled-coil stretches lie at residues 16 to 125 (TVQT…KQIY) and 188 to 389 (KEQN…QQVV). 4 Spectrin repeats span residues 216–317 (QDYM…SHLK), 323–485 (HQFH…RTLQ), 505–612 (RQLL…EKVD), and 733–861 (EHFH…QNLE). An SH3 domain is found at 399-455 (LKPIPVEALCDFEGEQGLISRGYSYTLQKNNGESWELMDSAGNKLIAPAVCFVIPPT). Residue Ser465 is modified to Phosphoserine. Coiled-coil stretches lie at residues 585–820 (LLRT…GRRS) and 886–1645 (DSGV…SVAV). Phosphoserine is present on residues Ser887, Ser949, Ser1584, and Ser1657. The segment at 1557-1756 (ELDFLREENH…ELAVLVSGQK (200 aa)) is interacts with BFSP2 and VIM. Plectin repeat units lie at residues 1651 to 1685 (ENHL…WNMF) and 1700 to 1735 (VKGP…PAQY).

Belongs to the plakin or cytolinker family. In terms of assembly, homodimer or a heterodimer with EVPL. Found in a complex composed of PPL (via C-terminal linker domain), BFSP1 and BFSP2 in the retinal lens. Within the complex interacts (via C-terminal linker domain) with BFSP2. Interacts with VIM. Binds to the PH domain of AKT1. Interacts with FCGR1A. May interact with PPHLN1. In terms of tissue distribution, expressed in stratified squamous epithelia and in some other epithelia.

It localises to the cell junction. The protein localises to the desmosome. It is found in the cytoplasm. Its subcellular location is the cytoskeleton. The protein resides in the cell membrane. Component of the cornified envelope of keratinocytes. May link the cornified envelope to desmosomes and intermediate filaments. May act as a localization signal in PKB/AKT-mediated signaling. This chain is Periplakin (PPL), found in Homo sapiens (Human).